The chain runs to 384 residues: 8-amino-7-oxononanoate synthase (384 aa).

Residue Arg-21 coordinates substrate. 108-109 (GF) is a pyridoxal 5'-phosphate binding site. His-133 contributes to the substrate binding site. Pyridoxal 5'-phosphate contacts are provided by Ser-179, His-207, and Thr-233. An N6-(pyridoxal phosphate)lysine modification is found at Lys-236. Position 352 (Thr-352) interacts with substrate.

Belongs to the class-II pyridoxal-phosphate-dependent aminotransferase family. BioF subfamily. As to quaternary structure, homodimer. The cofactor is pyridoxal 5'-phosphate.

It carries out the reaction 6-carboxyhexanoyl-[ACP] + L-alanine + H(+) = (8S)-8-amino-7-oxononanoate + holo-[ACP] + CO2. The protein operates within cofactor biosynthesis; biotin biosynthesis. In terms of biological role, catalyzes the decarboxylative condensation of pimeloyl-[acyl-carrier protein] and L-alanine to produce 8-amino-7-oxononanoate (AON), [acyl-carrier protein], and carbon dioxide. The chain is 8-amino-7-oxononanoate synthase from Escherichia coli O17:K52:H18 (strain UMN026 / ExPEC).